Consider the following 1346-residue polypeptide: Cytokinesis protein sepH (1346 aa).

The segment at Met1 to Ser50 is disordered. Over residues Ser35–Ser50 the composition is skewed to basic and acidic residues. Positions Tyr60–Ile310 constitute a Protein kinase domain. ATP-binding positions include Leu66–Val74 and Lys89. The Proton acceptor role is filled by Asp182. Disordered regions lie at residues Arg342–Val380, Asp446–Arg497, and Leu1211–Ser1295. Composition is skewed to polar residues over residues Gln477–Gly489 and Arg1220–Lys1249.

It belongs to the protein kinase superfamily. Ser/Thr protein kinase family. CDC7 subfamily. The cofactor is Mg(2+).

It carries out the reaction L-seryl-[protein] + ATP = O-phospho-L-seryl-[protein] + ADP + H(+). It catalyses the reaction L-threonyl-[protein] + ATP = O-phospho-L-threonyl-[protein] + ADP + H(+). Required for early events during cytokinesis including localization of cytoskeletal components to the cytokinetic ring. The sequence is that of Cytokinesis protein sepH from Emericella nidulans (strain FGSC A4 / ATCC 38163 / CBS 112.46 / NRRL 194 / M139) (Aspergillus nidulans).